The chain runs to 2191 residues: MHSPGCTGPKAQWFLLLQLLLLHLDRVSATFISINRGLRVMKGSSAFLSGDHLRVAVPKEKDACRLEVVMNEPVTQRVGKLSPQVFDCHFLPNEVKYVHNGCPILDEDSVKLRLYRFTETDTFMETFLLRVYLVEPDCNIIRMSSNVLEVTEFYGLSQAIDKNLLQFDYDRTASLDCTIRLDPLRTQLPAHGKLVVVNRKSEGPRGDQPHSFFSETELGAGLKCPDGSCALELKQVASLKVSCEEFLLTGFHYQHMQPPSPNIDYIPIQLDLTDRRSKTVYKSESAWLPVYIRVGIPNQVPRAAFMAMFVLEVDQFILTPLTTSVLDCEEDETPKPLLVFNITKAPLQGYVTHLLDHTRPISSFTWKDLSDMQVAYQPPNSSHPERRHYTMELEVYDFFFERSAPITVHISIRTADTNAPRVSWNTGLNLLEGQSRAITWEQFQIVDNDDIGAVQLVTIGGLQHGRLTVREGKGFLFTVTDLQAGVVRYHHDDSDTTKDFVAFRIFDGHHSSHHKFPINILPKDDSPPFLITNVVIELEEGKTILIQGSMLRASDMDSSDDYIFFNITKFPQAGEIMKKPGPRLIGYPVPGFLQRDLFSGIIYYRHFGGEIFEDSFEFVLWDSHEPPNLSVPQVVTIHITPVDDQLPKEAPGISRHLVVKETEVAYITKKHLHFLDMESRDGELIYTVTRPPCFSFSHRHLDAGKLFMVDSIPKLTKNPTAPGLSSFTQGLILISANQHTCSSQFASQHAVNHMKVAYMPPMQDIGPSPRHVQFTVSVSNQHGGALHGICFNITVLPVDNQVPEVFTNTLRVVEGGQCTISTEHILVSDVDTPLDSISLSLKERPLHGGVELDGFPLNPRGTFSWRDLNTLKVWYQHDGSEVLQDEIFLEVTDGTNSAAFVLHIEVFPVNDEPPILKADLIPMMHCSEGGEVTITPEYISATDADSDDLELLFLIAREPQHGVVRKAGLHVDRFSQGDVISGAVTYKHTGGEIGLEPCSDTVVLVVSDGEADPLMNGCCYDGPDSSVPLHKSFPTYQLNITVHPVDNQPPSIIIGRMLTVDEGFSAALTTHHLTVVDWDTAPDDLKFMLASQPQFGYLENALPSAGFEKSNIGIRIASFQWTDMKASHINYVQSRHLRVEPTADQFTVYATDGKHRSLETTFHVIINPTNDEAPDLAVQNITVYEGHMVELDSSIISATDRDIPKDPLLFSIALKPQHGLLVDAAISKDSHQIKQLQHEIHSFSVDLLKNGMKLVYAHDDSESSADNFVIQLSDGKHKILKTISVNITPVNDETPTLSKKAEISMAVGDTRVLSSAVLSATDKDSPREKIHYVFERLPQNGQLQLKIGRDWVPLSTGMQCTQEDVDLNLLRYTHAGKTDSQDGDSFTFYLWDEDNRSPAFDCHIIIEDMGKGDIVIHAKPLVVVKGDRGLLTTATLLAVDGADKPEELLYLITSPPRHGQVEYVHSPGVPIASFSQMDIAGQTVCYIHKSRTAVPTDSFRFTISNGLQTQRGVFEITLQTVDSALPVLTKNKRLRLAEGAMGLLSADHLQLTDPDTPPENLTFFLAQLPRHGYLFLRGKALQHNFTQRDVDSGGVAYQHSGGGAREDYFTFLATDRKNQGFVVDGKVQKEPVRFTIQVDQLDKAAPRITHLHSPTQVGLLKNGCYGIYITSRVLKASDPDTEDDQIIFKILRGPLYGRLENTTTGEFIHERFSQKDLSHKTILYIINPSLQVTSDILEFQAMDPTGNTATPQSLDLRWSYIEWAQTAYEVCENVGLLPLEVTRRGYPMDSAFVGVEVNQVSATVGKDFTVTPSKLLQFDPGMSTKMWNIAITYDGLEEDDEVFEVILNSPVNAVLGTQTKAAVKILDSKGGRCHPSNSFNQSKHSTWGKGPWHPLPSGSSSLTTSGSPLLERPPPSFTSGDALQGFGLTDLTQRKTMTQGNGKSVLPSSVCRNGTDTIYNYHGIVSLKLEGDRFSAHKRKAKISIVSQPQRTIKVAELPLADKVESTTDLHFLRQGLRPLFPKNCSVDLKGLFHFEESTHRLYQCDGISWKAWSPQTKGLEDRSCPGGWLLHSGYCHILVTRQKGTWTTATRACREQHQGDLVTVLSRRHMQWLWAMSGRKPFWIGLKNQPRTGHWEWIGGEPVAFTNWRRGAPLHPKPGKNCALVQKRGQWQTKNCSKGKAHNFVCSRKL.

An N-terminal signal peptide occupies residues methionine 1–alanine 29. The short motif at arginine 205–aspartate 207 is the Cell attachment site element. CSPG repeat units lie at residues valine 300–glutamate 394, alanine 419–phenylalanine 506, and proline 527–tryptophan 621. Residue asparagine 341 is glycosylated (N-linked (GlcNAc...) asparagine). N-linked (GlcNAc...) asparagine glycans are attached at residues asparagine 566 and asparagine 628. CSPG repeat units follow at residues lysine 648–serine 779, glutamine 801–threonine 892, and glutamate 912–serine 1007. N-linked (GlcNAc...) asparagine glycosylation occurs at asparagine 1039. 6 CSPG repeats span residues proline 1049–threonine 1151, glutamate 1172–serine 1273, threonine 1294–tryptophan 1391, glycine 1412–serine 1504, leucine 1525–threonine 1614, and histidine 1650–methionine 1742. Asparagine 1180 carries an N-linked (GlcNAc...) asparagine glycan. Residue asparagine 1584 is glycosylated (N-linked (GlcNAc...) asparagine). Residues alanine 1749–asparagine 1848 form the Calx-beta domain. The tract at residues histidine 1874–aspartate 1921 is disordered. Over residues proline 1875–serine 1885 the composition is skewed to polar residues. A compositionally biased stretch (low complexity) spans leucine 1895–leucine 1910. Residues histidine 2072–valine 2186 form the C-type lectin domain. An intrachain disulfide couples cysteine 2163 to cysteine 2177.

The protein belongs to the FRAS1 family. Interacts with FREM2. As to expression, expressed in epidermis and hair follicles. Expressed in many developing epidermal appendages, including the whisker and sensory vibrissae, cranial and trunk hair follicles, meibomian glands, teeth, footpads, eyelash primordia and invaginating mammary glands. Limb expression localizes to sheets of dermal cells on the apical and basal surfaces of the digits but, unlike FRAS1, is excluded from the apical ectodermal ridge. Usually expressed at higher level in dermal cells underlying the differentiating epithelial components, especially underlying the epidermis of the head, limbs, and eyelids. Expression in the eyelid dermis is apparent as early as 13 dpc. Postnatal expression in the skin is limited to the dermal papillae. In the kidney, it is expressed from 12.5 dpc in the mesenchyme surrounding the branching ureteric tree, with a strong expression in the more proximal regions of these tubules rather than at the proliferating and branching ends of the ureteric buds. In hair follicle, it is selectively expressed in the vibrissal hair primordia during development. Preferentially expressed in the whisker pad epithelia of 12.5 dpc embryos, in both the epithelial and mesenchymal cells of developing hair follicles. In the early stages of hair follicle development (i.e. stages 0-1), it is expressed in both hair placodes and dermal condensations. In stage 2, it is detected in dermal condensations and adjacent epithelia, but not in the upper region of the hair follicles. Expressed at the tip of developing hair follicles in the later stages (i.e. stages 3-5).

Its subcellular location is the secreted. The protein localises to the extracellular space. It is found in the extracellular matrix. The protein resides in the basement membrane. Extracellular matrix protein that plays a role in epidermal differentiation and is required for epidermal adhesion during embryonic development. The polypeptide is FRAS1-related extracellular matrix protein 1 (Frem1) (Mus musculus (Mouse)).